Reading from the N-terminus, the 622-residue chain is Probable potassium transport system protein Kup (622 aa).

Helical transmembrane passes span 8-28, 50-70, 103-123, 137-157, 169-189, 215-235, 247-267, 285-305, 337-357, 366-386, 393-413, and 419-439; these read LAALTLGAIGVVYGDIGTSVL, VLSILFWTLTTIVSLKYVVLV, LGIGVFGTSLFYGDGVITPAI, PHFGKAVIPLTLIVLFCLFAV, FGPVTLVWFTSIAALGVPHIV, FIILGAVVLCVTGAEALYADL, WFSVAMPALTINYFGQGALLL, ALIPLVIMATMATVIASQALI, IYIPFVNWALFLAIVLAVVMF, AYGIAVTLDMLITTVLTFFVI, PLALCIAATGFFFLVDLAFFG, and LLQGGWFPLMIGSIVFMLMMT.

Belongs to the HAK/KUP transporter (TC 2.A.72) family.

The protein resides in the cell inner membrane. The enzyme catalyses K(+)(in) + H(+)(in) = K(+)(out) + H(+)(out). In terms of biological role, transport of potassium into the cell. Likely operates as a K(+):H(+) symporter. This chain is Probable potassium transport system protein Kup, found in Paracidovorax citrulli (strain AAC00-1) (Acidovorax citrulli).